Reading from the N-terminus, the 233-residue chain is Ribonuclease 3 (233 aa).

The region spanning 4–126 (LNKLMERLGH…IVGSIYIDAG (123 aa)) is the RNase III domain. A Mg(2+)-binding site is contributed by Glu-39. Asp-43 is an active-site residue. Mg(2+)-binding residues include Asp-112 and Glu-115. Residue Glu-115 is part of the active site. The DRBM domain occupies 153–222 (DAKSLLQEWL…AKRFLELLDD (70 aa)).

This sequence belongs to the ribonuclease III family. In terms of assembly, homodimer. The cofactor is Mg(2+).

It is found in the cytoplasm. It catalyses the reaction Endonucleolytic cleavage to 5'-phosphomonoester.. Digests double-stranded RNA. Involved in the processing of primary rRNA transcript to yield the immediate precursors to the large and small rRNAs (23S and 16S). Processes some mRNAs, and tRNAs when they are encoded in the rRNA operon. Processes pre-crRNA and tracrRNA of type II CRISPR loci if present in the organism. This is Ribonuclease 3 from Coxiella burnetii (strain CbuG_Q212) (Coxiella burnetii (strain Q212)).